A 250-amino-acid polypeptide reads, in one-letter code: MKKFYIAANWKMNMNRAEAKQLATEMKAGLKDGKNKYMIAPSFTLLQDVASVLKGSNILLGAQNMGLEEKGAHTGEVSVLQLLDVGVQAVILGHSERRHIYKETDDLINKKVKLALKHGLEVILCVGELLEEREAGHAEAVCERQIKKGLAEVSAKDLDKVTIAYEPVWAIGTGKNASPEDADAIHSSIRKTLAALYGEKAAKNMIIQYGGSMKPENAAGLLKKHNIDGGLIGGAGLKTETFLPIALFSE.

N9 to K11 contributes to the substrate binding site. H94 acts as the Electrophile in catalysis. E166 (proton acceptor) is an active-site residue. Residues G172, S212, and G233–G234 contribute to the substrate site.

The protein belongs to the triosephosphate isomerase family. Homodimer.

It localises to the cytoplasm. The catalysed reaction is D-glyceraldehyde 3-phosphate = dihydroxyacetone phosphate. The protein operates within carbohydrate biosynthesis; gluconeogenesis. Its pathway is carbohydrate degradation; glycolysis; D-glyceraldehyde 3-phosphate from glycerone phosphate: step 1/1. Its function is as follows. Involved in the gluconeogenesis. Catalyzes stereospecifically the conversion of dihydroxyacetone phosphate (DHAP) to D-glyceraldehyde-3-phosphate (G3P). The sequence is that of Triosephosphate isomerase from Treponema denticola (strain ATCC 35405 / DSM 14222 / CIP 103919 / JCM 8153 / KCTC 15104).